Here is a 68-residue protein sequence, read N- to C-terminus: Alpha-conotoxin PIVA (68 aa).

The N-terminal stretch at 1 to 16 (MFTVFLLVVLATTVVS) is a signal peptide. The propeptide occupies 17 to 41 (FTSDRASDDRNTNDKASRLLSHVVR). 3 disulfide bridges follow: cysteine 43/cysteine 57, cysteine 44/cysteine 52, and cysteine 55/cysteine 64. 4-hydroxyproline; partial is present on residues proline 48 and proline 54. 4-hydroxyproline is present on proline 61. Glutamine 66 bears the Glutamine amide mark.

This sequence belongs to the conotoxin A superfamily. Expressed by the venom duct.

It localises to the secreted. Functionally, alpha-conotoxins act on postsynaptic membranes, they bind to the nicotinic acetylcholine receptors (nAChR) and thus inhibit them. This toxin has higher affinity for the adult subtype (alpha-1-beta-1-gamma-delta (CHRNA1-CHRNB1-CHRNG-CHRND) subunits) (IC(50)=2.3 nM) of the receptor than for the fetal subtype (alpha-1-beta-1-epsilon-delta (CHRNA1-CHRNB1-CHRND-CHRNE) subunits) (IC(50)=22 nM). The sequence is that of Alpha-conotoxin PIVA from Conus purpurascens (Purple cone).